The sequence spans 200 residues: Superoxide dismutase [Mn] 2 (200 aa).

4 residues coordinate Mn(2+): histidine 28, histidine 76, aspartate 158, and histidine 162.

It belongs to the iron/manganese superoxide dismutase family. Mn(2+) is required as a cofactor.

The enzyme catalyses 2 superoxide + 2 H(+) = H2O2 + O2. Destroys superoxide anion radicals which are normally produced within the cells and which are toxic to biological systems. The polypeptide is Superoxide dismutase [Mn] 2 (sod2) (Halobacterium salinarum (strain ATCC 700922 / JCM 11081 / NRC-1) (Halobacterium halobium)).